Reading from the N-terminus, the 1037-residue chain is Ras guanine nucleotide exchange factor E (1037 aa).

Positions 5-35 (ECNNRIEYLQNKVLELESLNENLKGQLEYFQ) form a coiled coil. 8 disordered regions span residues 65–100 (NNNNNSNSNSNSNNNSSNSNNNSYSNFNSNNNTTNN), 114–150 (TNSNSTNSSPYIFGNNKDNSNNSNNSNNNNSNTELSN), 166–387 (TTTT…PLSN), 414–437 (TVNMIGGGGTPRSNNSSNGSLYHS), 451–472 (SSLSLSSTSPSPNNSQQNLTNP), 602–628 (INSNNQNNQNNNNNNNNNNNNNNNQLE), 907–935 (NTTTTTTTTTTTTTTNTTTSNNNNQQQLN), and 1004–1037 (EKETSSFDSGYGSVSDRPSKKEFSVTSLLNSFKS). Composition is skewed to low complexity over residues 114-145 (TNSNSTNSSPYIFGNNKDNSNNSNNSNNNNSN) and 166-200 (TTTTINTSNSNNSNNNNNNNNNNNNNNNNNNNNNN). Residues 229–239 (PTSSRNSPTNK) are compositionally biased toward polar residues. Positions 240–276 (SSPQFLSPLSKSPLSQSTQSTTVSSPSPSWTTTVPQS) are enriched in low complexity. Over residues 282-300 (TIVQSKSPYSPDTNISNKL) the composition is skewed to polar residues. Positions 318 to 360 (SPSKNSPRSLNSNNNNSSATTSITTPPTTSTPTPTTSTTTTTT) are enriched in low complexity. Positions 361–370 (TERRPEDRRS) are enriched in basic and acidic residues. Composition is skewed to polar residues over residues 372–387 (TSPFPNVGTTTPPLSN) and 424–437 (PRSNNSSNGSLYHS). The N-terminal Ras-GEF domain occupies 496-694 (NGFIVKGGTI…NLKRLLTNDR (199 aa)). Residues 726-1003 (DPTEIARQLT…YKLSLICEPK (278 aa)) enclose the Ras-GEF domain. Residues 907-930 (NTTTTTTTTTTTTTTNTTTSNNNN) are compositionally biased toward low complexity. Polar residues predominate over residues 1027–1037 (SVTSLLNSFKS).

Promotes the exchange of Ras-bound GDP by GTP. Seems to play a role in chemotaxis. The chain is Ras guanine nucleotide exchange factor E (gefE) from Dictyostelium discoideum (Social amoeba).